Reading from the N-terminus, the 181-residue chain is Protein GrpE (181 aa).

It belongs to the GrpE family. Homodimer.

The protein resides in the cytoplasm. Participates actively in the response to hyperosmotic and heat shock by preventing the aggregation of stress-denatured proteins, in association with DnaK and GrpE. It is the nucleotide exchange factor for DnaK and may function as a thermosensor. Unfolded proteins bind initially to DnaJ; upon interaction with the DnaJ-bound protein, DnaK hydrolyzes its bound ATP, resulting in the formation of a stable complex. GrpE releases ADP from DnaK; ATP binding to DnaK triggers the release of the substrate protein, thus completing the reaction cycle. Several rounds of ATP-dependent interactions between DnaJ, DnaK and GrpE are required for fully efficient folding. In Leptothrix cholodnii (strain ATCC 51168 / LMG 8142 / SP-6) (Leptothrix discophora (strain SP-6)), this protein is Protein GrpE.